Reading from the N-terminus, the 333-residue chain is Casein kinase II subunit beta-1 (333 aa).

A compositionally biased stretch (acidic residues) spans 58 to 78 (VEPEDDDDEEEEDEEDEEDMS). 2 disordered regions span residues 58–92 (VEPEDDDDEEEEDEEDEEDMSGGDGINKPHGERRH) and 282–333 (ARRY…ESEL). Basic residues predominate over residues 305–316 (ASRRRGPPRRQK).

This sequence belongs to the casein kinase 2 subunit beta family. Tetramer composed of two alpha chains, one beta chain and one beta' chain. In terms of processing, phosphorylated by alpha subunit.

In terms of biological role, regulatory subunit of casein kinase II/CK2. As part of the kinase complex regulates the basal catalytic activity of the alpha subunit a constitutively active serine/threonine-protein kinase that phosphorylates a large number of substrates containing acidic residues C-terminal to the phosphorylated serine or threonine. The chain is Casein kinase II subunit beta-1 (ckb-1) from Neurospora crassa (strain ATCC 24698 / 74-OR23-1A / CBS 708.71 / DSM 1257 / FGSC 987).